The chain runs to 107 residues: Phosphoribosyl-ATP pyrophosphatase (107 aa).

The protein belongs to the PRA-PH family.

Its subcellular location is the cytoplasm. It catalyses the reaction 1-(5-phospho-beta-D-ribosyl)-ATP + H2O = 1-(5-phospho-beta-D-ribosyl)-5'-AMP + diphosphate + H(+). The protein operates within amino-acid biosynthesis; L-histidine biosynthesis; L-histidine from 5-phospho-alpha-D-ribose 1-diphosphate: step 2/9. In Sinorhizobium medicae (strain WSM419) (Ensifer medicae), this protein is Phosphoribosyl-ATP pyrophosphatase.